Reading from the N-terminus, the 241-residue chain is Pyridoxal phosphate phosphatase PHOSPHO2 (241 aa).

Aspartate 8 (nucleophile) is an active-site residue. 2 residues coordinate Mg(2+): aspartate 8 and aspartate 10. Residue aspartate 10 is the Proton donor of the active site. Substrate contacts are provided by aspartate 19 and aspartate 99. Residue aspartate 179 participates in Mg(2+) binding.

This sequence belongs to the HAD-like hydrolase superfamily. PHOSPHO family. It depends on Mg(2+) as a cofactor.

The enzyme catalyses pyridoxal 5'-phosphate + H2O = pyridoxal + phosphate. In terms of biological role, phosphatase that has high activity toward pyridoxal 5'-phosphate (PLP). Also active at much lower level toward pyrophosphate, phosphoethanolamine (PEA), phosphocholine (PCho), phospho-l-tyrosine, fructose-6-phosphate, p-nitrophenyl phosphate, and h-glycerophosphate. This Mus musculus (Mouse) protein is Pyridoxal phosphate phosphatase PHOSPHO2 (Phospho2).